Reading from the N-terminus, the 598-residue chain is Elongation factor 4 (598 aa).

One can recognise a tr-type G domain in the interval Lys2 to Val184. GTP is bound by residues Asp14–Thr19 and Asn131–Asp134.

The protein belongs to the TRAFAC class translation factor GTPase superfamily. Classic translation factor GTPase family. LepA subfamily.

It localises to the cell inner membrane. It catalyses the reaction GTP + H2O = GDP + phosphate + H(+). Functionally, required for accurate and efficient protein synthesis under certain stress conditions. May act as a fidelity factor of the translation reaction, by catalyzing a one-codon backward translocation of tRNAs on improperly translocated ribosomes. Back-translocation proceeds from a post-translocation (POST) complex to a pre-translocation (PRE) complex, thus giving elongation factor G a second chance to translocate the tRNAs correctly. Binds to ribosomes in a GTP-dependent manner. The chain is Elongation factor 4 from Psychromonas ingrahamii (strain DSM 17664 / CCUG 51855 / 37).